The following is a 102-amino-acid chain: Urease subunit beta (102 aa).

Belongs to the urease beta subunit family. Heterotrimer of UreA (gamma), UreB (beta) and UreC (alpha) subunits. Three heterotrimers associate to form the active enzyme.

The protein localises to the cytoplasm. It carries out the reaction urea + 2 H2O + H(+) = hydrogencarbonate + 2 NH4(+). The protein operates within nitrogen metabolism; urea degradation; CO(2) and NH(3) from urea (urease route): step 1/1. In Acinetobacter baylyi (strain ATCC 33305 / BD413 / ADP1), this protein is Urease subunit beta.